Reading from the N-terminus, the 318-residue chain is Ankyrin repeat and SOCS box protein 7 (318 aa).

ANK repeat units follow at residues 13–42, 46–75, 80–109, 116–145, 149–178, 180–208, and 213–242; these read QEEL…SPNG, NGWT…DPTV, GGFT…RSDI, DGWT…EVDP, KGTT…NIDI, NGFL…DTNL, and DGQT…DTNT. The 54-residue stretch at 265 to 318 folds into the SOCS box domain; that stretch reads LDFLQEVTRQPRNLQDLCRIKIRQCIGLQNLKLLDELPIAKVMKDYLKHKFDDI.

It belongs to the ankyrin SOCS box (ASB) family. In terms of assembly, interacts with CUL5. Interacts with RNF7. Interacts with PSRC1.

The protein operates within protein modification; protein ubiquitination. Probable substrate-recognition component of a SCF-like ECS (Elongin-Cullin-SOCS-box protein) E3 ubiquitin-protein ligase complex which mediates the ubiquitination and subsequent proteasomal degradation of target proteins. Plays a role in spindle dynamics and genome integrity by targeting the mitotic progression protein PSRC1 for proteasomal degradation in a cell cycle-dependent manner. Also participates in meiosis by mediating the proper attachment between kinetochores and microtubules. In Homo sapiens (Human), this protein is Ankyrin repeat and SOCS box protein 7 (ASB7).